The primary structure comprises 161 residues: Nucleotide-binding protein Reut_A2760 (161 aa).

The protein belongs to the YajQ family.

Functionally, nucleotide-binding protein. The chain is Nucleotide-binding protein Reut_A2760 from Cupriavidus pinatubonensis (strain JMP 134 / LMG 1197) (Cupriavidus necator (strain JMP 134)).